We begin with the raw amino-acid sequence, 485 residues long: Isocitrate dehydrogenase [NADP], chloroplastic/mitochondrial (485 aa).

Residues 1-65 constitute a chloroplast and mitochondrion transit peptide; sequence MLNKLTHGVF…VQFHRASAVR (65 aa). NADP(+)-binding positions include 147 to 149 and arginine 154; that span reads TIT. Threonine 149 is a substrate binding site. Substrate is bound by residues 166–172, arginine 181, and arginine 204; that span reads SPNGTIR. A Mn(2+)-binding site is contributed by aspartate 323. Lysine 331 serves as a coordination point for NADP(+). Residue aspartate 346 coordinates Mn(2+). Residues 381 to 386 and asparagine 399 contribute to the NADP(+) site; that span reads GTVTRH.

It belongs to the isocitrate and isopropylmalate dehydrogenases family. It depends on Mg(2+) as a cofactor. Mn(2+) serves as cofactor.

Its subcellular location is the plastid. It localises to the chloroplast. The protein resides in the mitochondrion. The catalysed reaction is D-threo-isocitrate + NADP(+) = 2-oxoglutarate + CO2 + NADPH. Its function is as follows. May be involved in response to oxidative stresses. The chain is Isocitrate dehydrogenase [NADP], chloroplastic/mitochondrial from Arabidopsis thaliana (Mouse-ear cress).